A 324-amino-acid polypeptide reads, in one-letter code: Pepsin-2B (324 aa).

The 308-residue stretch at 14 to 321 (YYGVISIGTP…DRTNNKVGFA (308 aa)) folds into the Peptidase A1 domain. Asp-32 is an active-site residue. An intrachain disulfide couples Cys-45 to Cys-50. Residues 86 to 109 (QDTVSVGGGSDPNQELGESQTEPG) form a disordered region. Polar residues predominate over residues 96 to 107 (DPNQELGESQTE). A disulfide bond links Cys-206 and Cys-209. Asp-214 is a catalytic residue. Cys-247 and Cys-280 are oxidised to a cystine.

This sequence belongs to the peptidase A1 family.

This is Pepsin-2B from Gadus morhua (Atlantic cod).